Here is a 259-residue protein sequence, read N- to C-terminus: 5'-nucleotidase SurE (259 aa).

4 residues coordinate a divalent metal cation: D13, D14, S44, and N101.

The protein belongs to the SurE nucleotidase family. A divalent metal cation is required as a cofactor.

The protein resides in the cytoplasm. The catalysed reaction is a ribonucleoside 5'-phosphate + H2O = a ribonucleoside + phosphate. In terms of biological role, nucleotidase that shows phosphatase activity on nucleoside 5'-monophosphates. The protein is 5'-nucleotidase SurE of Flavobacterium johnsoniae (strain ATCC 17061 / DSM 2064 / JCM 8514 / BCRC 14874 / CCUG 350202 / NBRC 14942 / NCIMB 11054 / UW101) (Cytophaga johnsonae).